Reading from the N-terminus, the 116-residue chain is MATQRAHRAETPAHPNRLWIWEKHVYLDEFRRSWLPVVIKSNEKFQVILRQEDVTLGEAMSPSQLVPYELPLMWQLYPKDRYRSCDSMYWQILYHIKFRDVEDMLLELIDSESNDE.

This sequence belongs to the TCL1 family. In terms of assembly, homodimer. Interacts with AKT1, AKT2 and AKT3 (via PH domain). Interacts with PNPT1; the interaction has no effect on PNPT1 exonuclease activity.

The protein localises to the cytoplasm. Its subcellular location is the nucleus. It localises to the microsome. The protein resides in the endoplasmic reticulum. Enhances the phosphorylation and activation of AKT1 and AKT2. Enhances cell proliferation, stabilizes mitochondrial membrane potential and promotes cell survival. This is T-cell leukemia/lymphoma protein 1A (Tcl1a) from Mus musculus (Mouse).